The chain runs to 708 residues: Polyribonucleotide nucleotidyltransferase (708 aa).

Residues Asp-486 and Asp-492 each coordinate Mg(2+). Positions 553–612 (PRIIKFKINPEKIRDVIGKGGAVIRALTEETGTTIDISDDGSVTIACVSSEGGEQARKRI) constitute a KH domain. The 69-residue stretch at 622 to 690 (GRIYEGTVLK…EKGRLRLSMK (69 aa)) folds into the S1 motif domain.

Belongs to the polyribonucleotide nucleotidyltransferase family. The cofactor is Mg(2+).

The protein resides in the cytoplasm. It catalyses the reaction RNA(n+1) + phosphate = RNA(n) + a ribonucleoside 5'-diphosphate. Involved in mRNA degradation. Catalyzes the phosphorolysis of single-stranded polyribonucleotides processively in the 3'- to 5'-direction. The polypeptide is Polyribonucleotide nucleotidyltransferase (Nitrosomonas europaea (strain ATCC 19718 / CIP 103999 / KCTC 2705 / NBRC 14298)).